The chain runs to 171 residues: MTGTIRIIGIDPGLRRTGWAVIETVGNSLRFIGAGTVRSNDKADLASRLCQLHDGLAEILHLHMPQEAAVEATFVNKDAVATLKLGQARGIAMLVPARAGLRVAEYAPNAVKKAVIGVGHGEKRQIHMMVKVLMPKALFDGDDAADAIAVAICHAHHRQSPAWRLALEAQP.

Catalysis depends on residues aspartate 11, glutamate 71, and aspartate 143. Residues aspartate 11, glutamate 71, and aspartate 143 each coordinate Mg(2+).

This sequence belongs to the RuvC family. Homodimer which binds Holliday junction (HJ) DNA. The HJ becomes 2-fold symmetrical on binding to RuvC with unstacked arms; it has a different conformation from HJ DNA in complex with RuvA. In the full resolvosome a probable DNA-RuvA(4)-RuvB(12)-RuvC(2) complex forms which resolves the HJ. Mg(2+) serves as cofactor.

It is found in the cytoplasm. It carries out the reaction Endonucleolytic cleavage at a junction such as a reciprocal single-stranded crossover between two homologous DNA duplexes (Holliday junction).. Its function is as follows. The RuvA-RuvB-RuvC complex processes Holliday junction (HJ) DNA during genetic recombination and DNA repair. Endonuclease that resolves HJ intermediates. Cleaves cruciform DNA by making single-stranded nicks across the HJ at symmetrical positions within the homologous arms, yielding a 5'-phosphate and a 3'-hydroxyl group; requires a central core of homology in the junction. The consensus cleavage sequence is 5'-(A/T)TT(C/G)-3'. Cleavage occurs on the 3'-side of the TT dinucleotide at the point of strand exchange. HJ branch migration catalyzed by RuvA-RuvB allows RuvC to scan DNA until it finds its consensus sequence, where it cleaves and resolves the cruciform DNA. In Chelativorans sp. (strain BNC1), this protein is Crossover junction endodeoxyribonuclease RuvC.